A 199-amino-acid chain; its full sequence is Superoxide dismutase [Mn/Fe] (199 aa).

Fe(3+) contacts are provided by H27, H81, D161, and H165. Mn(2+) is bound by residues H27, H81, D161, and H165.

This sequence belongs to the iron/manganese superoxide dismutase family. Homodimer. It depends on Mn(2+) as a cofactor. Fe(3+) serves as cofactor.

The enzyme catalyses 2 superoxide + 2 H(+) = H2O2 + O2. Functionally, destroys superoxide anion radicals which are normally produced within the cells and which are toxic to biological systems. Catalyzes the dismutation of superoxide anion radicals into O2 and H2O2 by successive reduction and oxidation of the transition metal ion at the active site. This Staphylococcus epidermidis (strain ATCC 35984 / DSM 28319 / BCRC 17069 / CCUG 31568 / BM 3577 / RP62A) protein is Superoxide dismutase [Mn/Fe] (sodA).